We begin with the raw amino-acid sequence, 567 residues long: UPF0313 protein Tpet_0582 (567 aa).

Residues 288-560 (KAIETVKFSI…NKMKENVLFK (273 aa)) enclose the Radical SAM core domain. 3 residues coordinate [4Fe-4S] cluster: cysteine 303, cysteine 307, and cysteine 310.

This sequence belongs to the UPF0313 family. [4Fe-4S] cluster is required as a cofactor.

This Thermotoga petrophila (strain ATCC BAA-488 / DSM 13995 / JCM 10881 / RKU-1) protein is UPF0313 protein Tpet_0582.